The sequence spans 419 residues: Chaperone protein dnaJ 2 (419 aa).

In terms of domain architecture, J spans 14-75; that stretch reads KFYEILGVPK…EKREIYDQYG (62 aa). Residues 136-220 form a CR-type zinc finger; sequence GTTKKLSLSR…CKGEKVVSEK (85 aa). Zn(2+)-binding residues include Cys149, Cys152, Cys165, Cys168, Cys192, Cys195, Cys208, and Cys211. 4 CXXCXGXG motif repeats span residues 149–156, 165–172, 192–199, and 208–215; these read CSKCNGKG, CGGCQGSG, CNDCKGTG, and CPQCKGEK. Positions 378–391 are enriched in basic and acidic residues; sequence TTLHDVNIEDEMKR. A disordered region spans residues 378-419; the sequence is TTLHDVNIEDEMKRKAQAQREAYDDDEEDHPGGAQRVQCAQQ. The residue at position 416 (Cys416) is a Cysteine methyl ester. Cys416 carries S-farnesyl cysteine lipidation. Residues 417-419 constitute a propeptide, removed in mature form; it reads AQQ.

The protein belongs to the DnaJ family. A/I subfamily. In terms of assembly, homodimer. Requires Zn(2+) as cofactor. Post-translationally, farnesylated. In terms of tissue distribution, expressed in both etiolated and light-grown tissues.

The protein localises to the membrane. Functionally, plays a continuous role in plant development probably in the structural organization of compartments. The protein is Chaperone protein dnaJ 2 (ATJ2) of Arabidopsis thaliana (Mouse-ear cress).